We begin with the raw amino-acid sequence, 330 residues long: Ketol-acid reductoisomerase (NADP(+)) (330 aa).

The 181-residue stretch at 2–182 (VETFYEKDAD…GCTRAGVIKT (181 aa)) folds into the KARI N-terminal Rossmann domain. NADP(+)-binding positions include 25 to 28 (YGSQ), lysine 48, serine 51, serine 53, and 83 to 86 (DEVQ). Histidine 108 is an active-site residue. NADP(+) is bound at residue glycine 134. Residues 183-328 (TFKEETETDL…EKLRAMMPWI (146 aa)) enclose the KARI C-terminal knotted domain. Mg(2+)-binding residues include aspartate 191, glutamate 195, glutamate 227, and glutamate 231. Serine 252 provides a ligand contact to substrate.

This sequence belongs to the ketol-acid reductoisomerase family. The cofactor is Mg(2+).

It catalyses the reaction (2R)-2,3-dihydroxy-3-methylbutanoate + NADP(+) = (2S)-2-acetolactate + NADPH + H(+). It carries out the reaction (2R,3R)-2,3-dihydroxy-3-methylpentanoate + NADP(+) = (S)-2-ethyl-2-hydroxy-3-oxobutanoate + NADPH + H(+). It functions in the pathway amino-acid biosynthesis; L-isoleucine biosynthesis; L-isoleucine from 2-oxobutanoate: step 2/4. Its pathway is amino-acid biosynthesis; L-valine biosynthesis; L-valine from pyruvate: step 2/4. Its function is as follows. Involved in the biosynthesis of branched-chain amino acids (BCAA). Catalyzes an alkyl-migration followed by a ketol-acid reduction of (S)-2-acetolactate (S2AL) to yield (R)-2,3-dihydroxy-isovalerate. In the isomerase reaction, S2AL is rearranged via a Mg-dependent methyl migration to produce 3-hydroxy-3-methyl-2-ketobutyrate (HMKB). In the reductase reaction, this 2-ketoacid undergoes a metal-dependent reduction by NADPH to yield (R)-2,3-dihydroxy-isovalerate. The chain is Ketol-acid reductoisomerase (NADP(+)) from Petrotoga mobilis (strain DSM 10674 / SJ95).